Reading from the N-terminus, the 475-residue chain is Membrane-bound lytic murein transglycosylase F (475 aa).

The N-terminal stretch at 1 to 15 (MKKLLLILCCITLLA) is a signal peptide. The interval 16–258 (ACQKVVVEQE…HLNEKYFAHV (243 aa)) is non-LT domain. The LT domain stretch occupies residues 259–475 (KRFDYVDTRA…KTEAAQPQQP (217 aa)). Glutamate 303 is an active-site residue.

It in the N-terminal section; belongs to the bacterial solute-binding protein 3 family. This sequence in the C-terminal section; belongs to the transglycosylase Slt family.

The protein resides in the cell outer membrane. The enzyme catalyses Exolytic cleavage of the (1-&gt;4)-beta-glycosidic linkage between N-acetylmuramic acid (MurNAc) and N-acetylglucosamine (GlcNAc) residues in peptidoglycan, from either the reducing or the non-reducing ends of the peptidoglycan chains, with concomitant formation of a 1,6-anhydrobond in the MurNAc residue.. In terms of biological role, murein-degrading enzyme that degrades murein glycan strands and insoluble, high-molecular weight murein sacculi, with the concomitant formation of a 1,6-anhydromuramoyl product. Lytic transglycosylases (LTs) play an integral role in the metabolism of the peptidoglycan (PG) sacculus. Their lytic action creates space within the PG sacculus to allow for its expansion as well as for the insertion of various structures such as secretion systems and flagella. The chain is Membrane-bound lytic murein transglycosylase F from Shewanella halifaxensis (strain HAW-EB4).